The sequence spans 122 residues: UPF0102 protein cgR_1859 (122 aa).

This sequence belongs to the UPF0102 family.

This is UPF0102 protein cgR_1859 from Corynebacterium glutamicum (strain R).